We begin with the raw amino-acid sequence, 389 residues long: Succinate--CoA ligase [ADP-forming] subunit beta (389 aa).

Residues arginine 9–lysine 236 enclose the ATP-grasp domain. Residues lysine 45, glycine 52–glycine 54, alanine 94, and glutamate 99 each bind ATP. Asparagine 191 and aspartate 205 together coordinate Mg(2+). Substrate contacts are provided by residues asparagine 256 and glycine 318–threonine 320.

It belongs to the succinate/malate CoA ligase beta subunit family. Heterotetramer of two alpha and two beta subunits. Requires Mg(2+) as cofactor.

It carries out the reaction succinate + ATP + CoA = succinyl-CoA + ADP + phosphate. The catalysed reaction is GTP + succinate + CoA = succinyl-CoA + GDP + phosphate. The protein operates within carbohydrate metabolism; tricarboxylic acid cycle; succinate from succinyl-CoA (ligase route): step 1/1. Succinyl-CoA synthetase functions in the citric acid cycle (TCA), coupling the hydrolysis of succinyl-CoA to the synthesis of either ATP or GTP and thus represents the only step of substrate-level phosphorylation in the TCA. The beta subunit provides nucleotide specificity of the enzyme and binds the substrate succinate, while the binding sites for coenzyme A and phosphate are found in the alpha subunit. This Micrococcus luteus (strain ATCC 4698 / DSM 20030 / JCM 1464 / CCM 169 / CCUG 5858 / IAM 1056 / NBRC 3333 / NCIMB 9278 / NCTC 2665 / VKM Ac-2230) (Micrococcus lysodeikticus) protein is Succinate--CoA ligase [ADP-forming] subunit beta.